We begin with the raw amino-acid sequence, 177 residues long: ATP synthase subunit delta (177 aa).

The protein belongs to the ATPase delta chain family. F-type ATPases have 2 components, F(1) - the catalytic core - and F(0) - the membrane proton channel. F(1) has five subunits: alpha(3), beta(3), gamma(1), delta(1), epsilon(1). F(0) has three main subunits: a(1), b(2) and c(10-14). The alpha and beta chains form an alternating ring which encloses part of the gamma chain. F(1) is attached to F(0) by a central stalk formed by the gamma and epsilon chains, while a peripheral stalk is formed by the delta and b chains.

The protein resides in the cell inner membrane. F(1)F(0) ATP synthase produces ATP from ADP in the presence of a proton or sodium gradient. F-type ATPases consist of two structural domains, F(1) containing the extramembraneous catalytic core and F(0) containing the membrane proton channel, linked together by a central stalk and a peripheral stalk. During catalysis, ATP synthesis in the catalytic domain of F(1) is coupled via a rotary mechanism of the central stalk subunits to proton translocation. In terms of biological role, this protein is part of the stalk that links CF(0) to CF(1). It either transmits conformational changes from CF(0) to CF(1) or is implicated in proton conduction. This chain is ATP synthase subunit delta, found in Vibrio cholerae serotype O1 (strain ATCC 39541 / Classical Ogawa 395 / O395).